Here is a 159-residue protein sequence, read N- to C-terminus: Insulin-like peptide 7 (159 aa).

The first 31 residues, 1–31 (MTRMIIQNSGSWTLCGAVLLFVLPLIPTPEA), serve as a signal peptide directing secretion. Intrachain disulfides connect C63/C136, C75/C150, and C135/C141. Positions 90–121 (TGNDEAWIKKTTTEPDGSTWLHVNYANMFLRS) are cleaved as a propeptide — connecting peptide.

The protein belongs to the insulin family. As to quaternary structure, heterodimer of a B chain and an A chain linked by two disulfide bonds. In terms of tissue distribution, broadly expressed at a low level throughout the embryo, except the yolk. Expressed at a moderate level in the embryonic midgut. Larval expression is restricted to ten cells of the ventral nerve cord - in four pairs of centrally located cells in the most posterior abdominal segments and in one pair of dorsally located cells in the A1 or A2 segments.

Its subcellular location is the secreted. Possible ligand of InR/insulin-like receptor. The sequence is that of Insulin-like peptide 7 from Drosophila melanogaster (Fruit fly).